The following is a 368-amino-acid chain: MNILFAGGGTGGHLYPAVAMAEEVQRMVPGASVLFAGTSRGIEAREVPRLGYRLHLLEVRGLRRGRSLKDMAANIGIAADFAAALASAVALVRRERPDVVVGTGGFVSAPVLFAAQLLGKKTLIQEQNAFPGVTTRLLSALATEVHLSFAEAARYLPKQKGVMVSGNPARSFTQVDASAAREHFGLDPSRPTLLVFGGSRGARSINNAVLRHHDLFCAAANLLWQTGSVDFERIRDACPPSRHLQIVPYIEEMGVAYSASDLVLCRAGASSIAELTNLAKPSVLVPYPYATGDHQRHNARALVHSGAAEVIEDSVLDSEESAAAIMELLHDGARRSAMSEAAGRLGAPDAARHLALRIISLAGTKQGS.

UDP-N-acetyl-alpha-D-glucosamine is bound by residues 10-12 (TGG), Asn-128, Arg-170, Ser-199, Ile-250, and Gln-295.

It belongs to the glycosyltransferase 28 family. MurG subfamily.

Its subcellular location is the cell inner membrane. The catalysed reaction is di-trans,octa-cis-undecaprenyl diphospho-N-acetyl-alpha-D-muramoyl-L-alanyl-D-glutamyl-meso-2,6-diaminopimeloyl-D-alanyl-D-alanine + UDP-N-acetyl-alpha-D-glucosamine = di-trans,octa-cis-undecaprenyl diphospho-[N-acetyl-alpha-D-glucosaminyl-(1-&gt;4)]-N-acetyl-alpha-D-muramoyl-L-alanyl-D-glutamyl-meso-2,6-diaminopimeloyl-D-alanyl-D-alanine + UDP + H(+). The protein operates within cell wall biogenesis; peptidoglycan biosynthesis. Functionally, cell wall formation. Catalyzes the transfer of a GlcNAc subunit on undecaprenyl-pyrophosphoryl-MurNAc-pentapeptide (lipid intermediate I) to form undecaprenyl-pyrophosphoryl-MurNAc-(pentapeptide)GlcNAc (lipid intermediate II). This is UDP-N-acetylglucosamine--N-acetylmuramyl-(pentapeptide) pyrophosphoryl-undecaprenol N-acetylglucosamine transferase from Chlorobium phaeovibrioides (strain DSM 265 / 1930) (Prosthecochloris vibrioformis (strain DSM 265)).